Here is a 338-residue protein sequence, read N- to C-terminus: DNA fragmentation factor subunit beta (338 aa).

In terms of domain architecture, CIDE-N spans 4-80 (KPKSVKLRAL…LLTLGQAWQG (77 aa)).

Heterodimer of DFFA and DFFB. Interacts with H1-1.

The protein localises to the cytoplasm. Its subcellular location is the nucleus. Inhibited by DFFA (DFF45). Functionally, nuclease that induces DNA fragmentation and chromatin condensation during apoptosis. Degrades naked DNA and induces apoptotic morphology. The protein is DNA fragmentation factor subunit beta (DFFB) of Homo sapiens (Human).